The chain runs to 375 residues: MARDYYEILGVSRDTDKEELKQAYRRLARKYHPDVNKEPGAEDRFKEINRAYEVLSEPETRARYDRFGPEGVSGAGAGFQDVGDMGGFADIFESIFSGFAGGMGSPTQQRRRSGPARGDDLRLDLKLDFREAVFGGEKEIRISHLENCEVCSGSGAKPGTRPRTCSTCSGSGQVRRVTRTPFGSFTQVSTCPTCNGTGMVIEDKCDACDGKGANQVTKKLKITIPAGVDNGTRLRISSEGDAGQRGGPSGDLYVYLFVNEDEEFQRDGINILSEIKISYLQAILGCRLEVDTVDGPVELIIPAGTQPNTVMKLENRGVPRLGNPVSRGDHMLNVLIDIPNKVTPEERELLEKLAKIKGDRTGKGGLEGFLGNLFK.

The 65-residue stretch at Asp4 to Gly68 folds into the J domain. Residues Gly135–Thr217 form a CR-type zinc finger. Zn(2+) contacts are provided by Cys148, Cys151, Cys165, Cys168, Cys191, Cys194, Cys205, and Cys208. CXXCXGXG motif repeat units lie at residues Cys148–Gly155, Cys165–Gly172, Cys191–Gly198, and Cys205–Gly212.

It belongs to the DnaJ family. As to quaternary structure, homodimer. Requires Zn(2+) as cofactor.

The protein resides in the cytoplasm. Participates actively in the response to hyperosmotic and heat shock by preventing the aggregation of stress-denatured proteins and by disaggregating proteins, also in an autonomous, DnaK-independent fashion. Unfolded proteins bind initially to DnaJ; upon interaction with the DnaJ-bound protein, DnaK hydrolyzes its bound ATP, resulting in the formation of a stable complex. GrpE releases ADP from DnaK; ATP binding to DnaK triggers the release of the substrate protein, thus completing the reaction cycle. Several rounds of ATP-dependent interactions between DnaJ, DnaK and GrpE are required for fully efficient folding. Also involved, together with DnaK and GrpE, in the DNA replication of plasmids through activation of initiation proteins. This is Chaperone protein DnaJ from Nostoc punctiforme (strain ATCC 29133 / PCC 73102).